The primary structure comprises 72 residues: Translation initiation factor IF-1 (72 aa).

Residues 1–72 (MAKEDNIEMQ…SKGRIVFRSR (72 aa)) form the S1-like domain.

The protein belongs to the IF-1 family. In terms of assembly, component of the 30S ribosomal translation pre-initiation complex which assembles on the 30S ribosome in the order IF-2 and IF-3, IF-1 and N-formylmethionyl-tRNA(fMet); mRNA recruitment can occur at any time during PIC assembly.

It localises to the cytoplasm. Functionally, one of the essential components for the initiation of protein synthesis. Stabilizes the binding of IF-2 and IF-3 on the 30S subunit to which N-formylmethionyl-tRNA(fMet) subsequently binds. Helps modulate mRNA selection, yielding the 30S pre-initiation complex (PIC). Upon addition of the 50S ribosomal subunit IF-1, IF-2 and IF-3 are released leaving the mature 70S translation initiation complex. In Shewanella pealeana (strain ATCC 700345 / ANG-SQ1), this protein is Translation initiation factor IF-1.